Reading from the N-terminus, the 140-residue chain is uncharacterized protein (140 aa).

ATP is bound at residue 18-25 (GTNGSGKS).

This is an uncharacterized protein from Haemophilus influenzae (strain ATCC 51907 / DSM 11121 / KW20 / Rd).